Consider the following 732-residue polypeptide: 1,4-alpha-glucan branching enzyme GlgB 2 (732 aa).

D413 functions as the Nucleophile in the catalytic mechanism. E466 serves as the catalytic Proton donor.

It belongs to the glycosyl hydrolase 13 family. GlgB subfamily. Monomer.

The enzyme catalyses Transfers a segment of a (1-&gt;4)-alpha-D-glucan chain to a primary hydroxy group in a similar glucan chain.. The protein operates within glycan biosynthesis; glycogen biosynthesis. Its function is as follows. Catalyzes the formation of the alpha-1,6-glucosidic linkages in glycogen by scission of a 1,4-alpha-linked oligosaccharide from growing alpha-1,4-glucan chains and the subsequent attachment of the oligosaccharide to the alpha-1,6 position. The protein is 1,4-alpha-glucan branching enzyme GlgB 2 of Rhizobium etli (strain ATCC 51251 / DSM 11541 / JCM 21823 / NBRC 15573 / CFN 42).